A 394-amino-acid chain; its full sequence is Elongation factor Tu (394 aa).

The region spanning 10-204 is the tr-type G domain; that stretch reads KPHVNVGTIG…ALDSYIPTPE (195 aa). The segment at 19 to 26 is G1; that stretch reads GHVDHGKT. Residue 19-26 coordinates GTP; sequence GHVDHGKT. Position 26 (T26) interacts with Mg(2+). Residues 60 to 64 form a G2 region; the sequence is GITIN. Residues 81–84 are G3; sequence DCPG. Residues 81–85 and 136–139 each bind GTP; these read DCPGH and NKCD. The segment at 136–139 is G4; it reads NKCD. Residues 174-176 are G5; sequence SAL.

The protein belongs to the TRAFAC class translation factor GTPase superfamily. Classic translation factor GTPase family. EF-Tu/EF-1A subfamily. As to quaternary structure, monomer.

It localises to the cytoplasm. It catalyses the reaction GTP + H2O = GDP + phosphate + H(+). Its function is as follows. GTP hydrolase that promotes the GTP-dependent binding of aminoacyl-tRNA to the A-site of ribosomes during protein biosynthesis. This Neisseria gonorrhoeae (strain ATCC 700825 / FA 1090) protein is Elongation factor Tu.